Consider the following 303-residue polypeptide: Ribonuclease Z (303 aa).

Residues His-61, His-63, Asp-65, His-66, His-138, Asp-206, and His-265 each contribute to the Zn(2+) site. The Proton acceptor role is filled by Asp-65.

The protein belongs to the RNase Z family. Homodimer. The cofactor is Zn(2+).

The enzyme catalyses Endonucleolytic cleavage of RNA, removing extra 3' nucleotides from tRNA precursor, generating 3' termini of tRNAs. A 3'-hydroxy group is left at the tRNA terminus and a 5'-phosphoryl group is left at the trailer molecule.. Functionally, zinc phosphodiesterase, which displays some tRNA 3'-processing endonuclease activity. Probably involved in tRNA maturation, by removing a 3'-trailer from precursor tRNA. This chain is Ribonuclease Z, found in Agathobacter rectalis (strain ATCC 33656 / DSM 3377 / JCM 17463 / KCTC 5835 / VPI 0990) (Eubacterium rectale).